Here is a 175-residue protein sequence, read N- to C-terminus: Large ribosomal subunit protein uL18 (175 aa).

It belongs to the universal ribosomal protein uL18 family. As to quaternary structure, part of the 50S ribosomal subunit. Contacts the 5S and 23S rRNAs.

Its function is as follows. This is one of the proteins that bind and probably mediate the attachment of the 5S RNA into the large ribosomal subunit, where it forms part of the central protuberance. The protein is Large ribosomal subunit protein uL18 of Methanoculleus marisnigri (strain ATCC 35101 / DSM 1498 / JR1).